We begin with the raw amino-acid sequence, 539 residues long: uncharacterized protein (539 aa).

6-20 (LIIGGGGAAARAAIE) provides a ligand contact to FAD. Catalysis depends on residues His227 and Arg243.

The protein belongs to the FAD-dependent oxidoreductase 2 family. FRD/SDH subfamily. FAD serves as cofactor.

This is an uncharacterized protein from Methanocaldococcus jannaschii (strain ATCC 43067 / DSM 2661 / JAL-1 / JCM 10045 / NBRC 100440) (Methanococcus jannaschii).